A 202-amino-acid chain; its full sequence is uncharacterized protein (202 aa).

A signal peptide spans 1-19 (MRRKNGFSVASVFILCSIA). Residues 177 to 199 (FLASSSSSFSSFLPSIAIILFFV) traverse the membrane as a helical segment.

Its subcellular location is the membrane. This is an uncharacterized protein from Caenorhabditis elegans.